The primary structure comprises 391 residues: E3 ubiquitin-protein ligase RMND5A (391 aa).

In terms of domain architecture, LisH spans Ser114 to Ile146. The region spanning Pro153–Gln210 is the CTLH domain. An RING-Gid-type zinc finger spans residues Cys336–Cys377.

Identified in the CTLH complex that contains at least RANBP9, MKLN1, MAEA, RMND5A, GID8 and ARMC8.

It is found in the nucleus. The protein resides in the nucleoplasm. It localises to the cytoplasm. It catalyses the reaction S-ubiquitinyl-[E2 ubiquitin-conjugating enzyme]-L-cysteine + [acceptor protein]-L-lysine = [E2 ubiquitin-conjugating enzyme]-L-cysteine + N(6)-ubiquitinyl-[acceptor protein]-L-lysine.. E3 ubiquitin-protein ligase component of the CTLH complex. The protein is E3 ubiquitin-protein ligase RMND5A (rmnd5a) of Xenopus tropicalis (Western clawed frog).